A 550-amino-acid chain; its full sequence is Eukaryotic translation initiation factor 3 subunit L (550 aa).

Positions 1–20 (MVRDSFDGGHTGDPERDLAY) are disordered. The PCI domain occupies 309–503 (EATKIFVNCL…IDDSTTDLDF (195 aa)).

This sequence belongs to the eIF-3 subunit L family. In terms of assembly, component of the eukaryotic translation initiation factor 3 (eIF-3) complex.

It localises to the cytoplasm. Functionally, component of the eukaryotic translation initiation factor 3 (eIF-3) complex, which is involved in protein synthesis of a specialized repertoire of mRNAs and, together with other initiation factors, stimulates binding of mRNA and methionyl-tRNAi to the 40S ribosome. The eIF-3 complex specifically targets and initiates translation of a subset of mRNAs involved in cell proliferation. In Brugia malayi (Filarial nematode worm), this protein is Eukaryotic translation initiation factor 3 subunit L.